A 576-amino-acid chain; its full sequence is Putative pentatricopeptide repeat-containing protein At5g47460 (576 aa).

14 PPR repeats span residues 20–53 (SSNS…GEKP), 54–88 (DASP…GFVS), 89–119 (NTRL…MPDP), 120–154 (DVIS…DVFP), 155–189 (NEFS…GLEK), 191–225 (NVVV…DTVS), 226–252 (WNAI…MPNP), 253–287 (DTVT…NSSS), 288–318 (WNTI…GVRF), 319–353 (DEYS…GLDS), 354–384 (RVVV…MPRK), 385–419 (NLIV…RFLK), 421–452 (DRFT…MINE), and 458–488 (SVEH…FGFG). The type E motif stretch occupies residues 493–570 (AWRALLGACS…EVGSSWIDSR (78 aa)).

The protein belongs to the PPR family. PCMP-E subfamily.

This chain is Putative pentatricopeptide repeat-containing protein At5g47460 (PCMP-E103), found in Arabidopsis thaliana (Mouse-ear cress).